We begin with the raw amino-acid sequence, 433 residues long: Serine hydroxymethyltransferase (433 aa).

121-123 (AHV) serves as a coordination point for (6S)-5,6,7,8-tetrahydrofolate. An N6-(pyridoxal phosphate)lysine modification is found at K227. E243 contacts (6S)-5,6,7,8-tetrahydrofolate.

This sequence belongs to the SHMT family. Homodimer. It depends on pyridoxal 5'-phosphate as a cofactor.

It localises to the cytoplasm. It participates in amino-acid biosynthesis; glycine biosynthesis; glycine from L-serine: step 1/1. Functionally, catalyzes the reversible interconversion of serine and glycine with a modified folate serving as the one-carbon carrier. Also exhibits a pteridine-independent aldolase activity toward beta-hydroxyamino acids, producing glycine and aldehydes, via a retro-aldol mechanism. This chain is Serine hydroxymethyltransferase, found in Saccharolobus islandicus (strain Y.G.57.14 / Yellowstone #1) (Sulfolobus islandicus).